The sequence spans 764 residues: 5-methyltetrahydropteroyltriglutamate--homocysteine methyltransferase (764 aa).

5-methyltetrahydropteroyltri-L-glutamate-binding positions include 16 to 19 (RELK) and Lys-117. L-homocysteine is bound by residues 442 to 444 (IGS) and Glu-495. L-methionine-binding positions include 442–444 (IGS) and Glu-495. 5-methyltetrahydropteroyltri-L-glutamate contacts are provided by residues 526 to 527 (RC) and Trp-572. Asp-610 lines the L-homocysteine pocket. Asp-610 lines the L-methionine pocket. Glu-616 is a binding site for 5-methyltetrahydropteroyltri-L-glutamate. Zn(2+) contacts are provided by His-652, Cys-654, and Glu-676. The active-site Proton donor is the His-705. Cys-737 lines the Zn(2+) pocket.

The protein belongs to the vitamin-B12 independent methionine synthase family. Requires Zn(2+) as cofactor.

It catalyses the reaction 5-methyltetrahydropteroyltri-L-glutamate + L-homocysteine = tetrahydropteroyltri-L-glutamate + L-methionine. It functions in the pathway amino-acid biosynthesis; L-methionine biosynthesis via de novo pathway; L-methionine from L-homocysteine (MetE route): step 1/1. Its function is as follows. Catalyzes the transfer of a methyl group from 5-methyltetrahydrofolate to homocysteine resulting in methionine formation. The protein is 5-methyltetrahydropteroyltriglutamate--homocysteine methyltransferase of Bordetella pertussis (strain Tohama I / ATCC BAA-589 / NCTC 13251).